Consider the following 822-residue polypeptide: Tyrosine-protein kinase Fer (822 aa).

An F-BAR domain is found at 1–259 (MGFGSDLKNS…SVEQIDPSTE (259 aa)). The tract at residues 1–300 (MGFGSDLKNS…QANEIMWNNL (300 aa)) is important for interaction with membranes containing phosphoinositides. 2 coiled-coil regions span residues 123–185 (AEMI…HNQY) and 301–390 (TAES…KVQE). Tyrosine 402 is modified (phosphotyrosine). At serine 434 the chain carries Phosphoserine. The SH2 domain occupies 460 to 550 (WYHGAIPRIE…KSGVVLLNPI (91 aa)). Residues 563–816 (VILGELLGKG…FSELQKELTI (254 aa)) form the Protein kinase domain. Residues 569 to 577 (LGKGNFGEV) and lysine 591 each bind ATP. Tyrosine 615 is modified (phosphotyrosine; by autocatalysis). Aspartate 684 (proton acceptor) is an active-site residue. At tyrosine 714 the chain carries Phosphotyrosine; by autocatalysis.

This sequence belongs to the protein kinase superfamily. Tyr protein kinase family. Fes/fps subfamily. In terms of assembly, homotrimer. Interacts with ARHGDIA, IRS1, JAK1, NRP1, PIK3R1, PLEC and TMF1. Interacts with PPP1CA and regulates its phosphorylation at 'Thr-320'. Interacts with CTNND1, EGFR, FLT3, PECAM1, PDGFR and STAT3. Interacts (via SH2 domain) with CTTN. Interacts with HSP90; this stabilizes phosphorylated FER and protects FER against proteasomal degradation. Component of a complex that contains at least FER, CTTN and PTK2/FAK1. Post-translationally, autophosphorylated. In terms of processing, polyubiquitinated; this leads to proteasomal degradation. Isoform 1 is detected in normal colon and in fibroblasts (at protein level). Isoform 3 is detected in normal testis, in colon carcinoma-derived metastases in lung, liver and ovary, and in colon carcinoma and hepato carcinoma cell lines (at protein level). Isoform 3 is not detected in normal colon or in normal fibroblasts (at protein level). Widely expressed.

The protein localises to the cytoplasm. It is found in the cytoskeleton. Its subcellular location is the cell membrane. It localises to the cell projection. The protein resides in the cell junction. The protein localises to the membrane. It is found in the nucleus. Its subcellular location is the cell cortex. It carries out the reaction L-tyrosyl-[protein] + ATP = O-phospho-L-tyrosyl-[protein] + ADP + H(+). With respect to regulation, activated by phosphatidic acid binding. Activated by hydrogen peroxide (in vitro). Activated by reactive oxygen species (ROS). In terms of biological role, tyrosine-protein kinase that acts downstream of cell surface receptors for growth factors and plays a role in the regulation of the actin cytoskeleton, microtubule assembly, lamellipodia formation, cell adhesion, cell migration and chemotaxis. Acts downstream of EGFR, KIT, PDGFRA and PDGFRB. Acts downstream of EGFR to promote activation of NF-kappa-B and cell proliferation. May play a role in the regulation of the mitotic cell cycle. Plays a role in the insulin receptor signaling pathway and in activation of phosphatidylinositol 3-kinase. Acts downstream of the activated FCER1 receptor and plays a role in FCER1 (high affinity immunoglobulin epsilon receptor)-mediated signaling in mast cells. Plays a role in the regulation of mast cell degranulation. Plays a role in leukocyte recruitment and diapedesis in response to bacterial lipopolysaccharide (LPS). Plays a role in synapse organization, trafficking of synaptic vesicles, the generation of excitatory postsynaptic currents and neuron-neuron synaptic transmission. Plays a role in neuronal cell death after brain damage. Phosphorylates CTTN, CTNND1, PTK2/FAK1, GAB1, PECAM1 and PTPN11. May phosphorylate JUP and PTPN1. Can phosphorylate STAT3, but the biological relevance of this depends on cell type and stimulus. This Homo sapiens (Human) protein is Tyrosine-protein kinase Fer (FER).